Consider the following 207-residue polypeptide: Probable molybdenum cofactor guanylyltransferase (207 aa).

GTP is bound by residues 9–11 (LAG), K21, and D97. D97 lines the Mg(2+) pocket.

Belongs to the MobA family. Mg(2+) is required as a cofactor.

The protein resides in the cytoplasm. The catalysed reaction is Mo-molybdopterin + GTP + H(+) = Mo-molybdopterin guanine dinucleotide + diphosphate. Functionally, transfers a GMP moiety from GTP to Mo-molybdopterin (Mo-MPT) cofactor (Moco or molybdenum cofactor) to form Mo-molybdopterin guanine dinucleotide (Mo-MGD) cofactor. The polypeptide is Probable molybdenum cofactor guanylyltransferase (Nostoc sp. (strain PCC 7120 / SAG 25.82 / UTEX 2576)).